Reading from the N-terminus, the 225-residue chain is MISWINGELVETWQTNQKFFVLINCQGLGYEIQILESFFLKLKTNQISNKKITLWIKHIKKEDSDLLFGFTSKDQKFFFIEILSVRGVGSQIGMSILNKFSISEIIKAIKTQDKKLICSIPGIGQKMSDRLILELKSKFKSKIQIEEEKGQEEFEITNPEIYKLMEDLQLTLQSLNYKNKEIKTILPFLIKELGLPTKKEKNLSFENLLNLAMNHLDQGNSNLAR.

Residues 1–71 (MISWINGELV…EDSDLLFGFT (71 aa)) form a domain I region. Residues 72–150 (SKDQKFFFIE…SKIQIEEEKG (79 aa)) form a domain II region. The interval 151 to 161 (QEEFEITNPEI) is flexible linker. A domain III region spans residues 161–225 (IYKLMEDLQL…LDQGNSNLAR (65 aa)).

The protein belongs to the RuvA family. Homotetramer. Forms an RuvA(8)-RuvB(12)-Holliday junction (HJ) complex. HJ DNA is sandwiched between 2 RuvA tetramers; dsDNA enters through RuvA and exits via RuvB. An RuvB hexamer assembles on each DNA strand where it exits the tetramer. Each RuvB hexamer is contacted by two RuvA subunits (via domain III) on 2 adjacent RuvB subunits; this complex drives branch migration. In the full resolvosome a probable DNA-RuvA(4)-RuvB(12)-RuvC(2) complex forms which resolves the HJ.

Its subcellular location is the cytoplasm. Functionally, the RuvA-RuvB-RuvC complex processes Holliday junction (HJ) DNA during genetic recombination and DNA repair, while the RuvA-RuvB complex plays an important role in the rescue of blocked DNA replication forks via replication fork reversal (RFR). RuvA specifically binds to HJ cruciform DNA, conferring on it an open structure. The RuvB hexamer acts as an ATP-dependent pump, pulling dsDNA into and through the RuvAB complex. HJ branch migration allows RuvC to scan DNA until it finds its consensus sequence, where it cleaves and resolves the cruciform DNA. This is Holliday junction branch migration complex subunit RuvA from Prochlorococcus marinus (strain MIT 9215).